The sequence spans 457 residues: ATP-dependent protease ATPase subunit HslU (457 aa).

ATP-binding positions include Val-21, 63–68 (GVGKTE), Asp-269, Glu-335, and Arg-407.

This sequence belongs to the ClpX chaperone family. HslU subfamily. A double ring-shaped homohexamer of HslV is capped on each side by a ring-shaped HslU homohexamer. The assembly of the HslU/HslV complex is dependent on binding of ATP.

It localises to the cytoplasm. Its function is as follows. ATPase subunit of a proteasome-like degradation complex; this subunit has chaperone activity. The binding of ATP and its subsequent hydrolysis by HslU are essential for unfolding of protein substrates subsequently hydrolyzed by HslV. HslU recognizes the N-terminal part of its protein substrates and unfolds these before they are guided to HslV for hydrolysis. The chain is ATP-dependent protease ATPase subunit HslU from Desulfotalea psychrophila (strain LSv54 / DSM 12343).